Reading from the N-terminus, the 194-residue chain is ATP synthase subunit b 1 (194 aa).

A helical membrane pass occupies residues 1–21 (MLLGTVVTVLSTLPAIAYAMD).

Belongs to the ATPase B chain family. F-type ATPases have 2 components, F(1) - the catalytic core - and F(0) - the membrane proton channel. F(1) has five subunits: alpha(3), beta(3), gamma(1), delta(1), epsilon(1). F(0) has three main subunits: a(1), b(2) and c(10-14). The alpha and beta chains form an alternating ring which encloses part of the gamma chain. F(1) is attached to F(0) by a central stalk formed by the gamma and epsilon chains, while a peripheral stalk is formed by the delta and b chains.

It localises to the cell inner membrane. F(1)F(0) ATP synthase produces ATP from ADP in the presence of a proton or sodium gradient. F-type ATPases consist of two structural domains, F(1) containing the extramembraneous catalytic core and F(0) containing the membrane proton channel, linked together by a central stalk and a peripheral stalk. During catalysis, ATP synthesis in the catalytic domain of F(1) is coupled via a rotary mechanism of the central stalk subunits to proton translocation. Functionally, component of the F(0) channel, it forms part of the peripheral stalk, linking F(1) to F(0). The polypeptide is ATP synthase subunit b 1 (Granulibacter bethesdensis (strain ATCC BAA-1260 / CGDNIH1)).